Consider the following 185-residue polypeptide: Thiol:disulfide interchange protein DsbE (185 aa).

Residues 1–4 (MKRN) lie on the Cytoplasmic side of the membrane. The chain crosses the membrane as a helical span at residues 5 to 25 (VLLLPLLIFLLIAAALLWQLA). Residues 26–185 (RNAQGDDPTN…WDRYSREAAQ (160 aa)) lie on the Periplasmic side of the membrane. Positions 39 to 177 (ALTGKPVPAF…WESELKPLWD (139 aa)) constitute a Thioredoxin domain. C80 and C83 form a disulfide bridge.

Belongs to the thioredoxin family. DsbE subfamily.

Its subcellular location is the cell inner membrane. Involved in disulfide bond formation. Catalyzes a late, reductive step in the assembly of periplasmic c-type cytochromes, probably the reduction of disulfide bonds of the apocytochrome c to allow covalent linkage with the heme. Possible subunit of a heme lyase. The protein is Thiol:disulfide interchange protein DsbE (dsbE1) of Salmonella typhi.